A 102-amino-acid chain; its full sequence is Putative septation protein SpoVG 2 (102 aa).

Belongs to the SpoVG family.

Could be involved in septation. The protein is Putative septation protein SpoVG 2 of Listeria innocua serovar 6a (strain ATCC BAA-680 / CLIP 11262).